A 225-amino-acid polypeptide reads, in one-letter code: Histone H1 (225 aa).

Residues 1–20 (MGPKATSGTRGRGKKVGTKT) are disordered. Residues 23-94 (PLPKYKDLIV…GPAGSIKLLK (72 aa)) form the H15 domain. The tract at residues 95–147 (KAAQPKPEEAKRAAKPAKRVVKAAKPAKAKPAKAAKAAKPAKPVKAAKAASAV) is disordered. Residues 107-127 (AAKPAKRVVKAAKPAKAKPAK) are compositionally biased toward basic residues. Over residues 128–147 (AAKAAKPAKPVKAAKAASAV) the composition is skewed to low complexity.

This sequence belongs to the histone H1/H5 family.

The protein resides in the nucleus. It localises to the chromosome. Functionally, could act as an H1-type linker histone. This chain is Histone H1 (HHOA), found in Eremothecium gossypii (strain ATCC 10895 / CBS 109.51 / FGSC 9923 / NRRL Y-1056) (Yeast).